We begin with the raw amino-acid sequence, 549 residues long: Dicarboxylate transporter 2.2, chloroplastic (549 aa).

The transit peptide at 1 to 54 (MESLALRSISLSASYLSLHRSSSKSFALLPPSISVHTSPTLRSLSISSPRFTLR) directs the protein to the chloroplast. Positions 57 to 79 (ASSLPEEQNKPQPPPPSPPQPQG) are disordered. A compositionally biased stretch (pro residues) spans 67 to 77 (PQPPPPSPPQP). Helical transmembrane passes span 79–99 (GAKL…RFLI), 115–135 (IFLF…AWAF), 151–171 (TAFA…FFFA), 220–240 (AGGV…SYPG), 247–267 (LGSF…AILL), 294–314 (WFKV…LIIY), 344–364 (NEWI…FGEA), 365–385 (IGIA…LLGV), 403–423 (WFAV…VAWM), 436–456 (LTWP…HYLF), 470–490 (FLAM…CLAF), and 523–543 (VGFV…SFWW).

Belongs to the SLC13A/DASS transporter (TC 2.A.47) family. DIT1 subfamily. Expressed in roots, rosette and cauline leaves, stems, flowers and siliques.

Its subcellular location is the plastid. It is found in the chloroplast inner membrane. In terms of biological role, may be involved in the transport of dicarboxylate compounds. The sequence is that of Dicarboxylate transporter 2.2, chloroplastic (DIT2-2) from Arabidopsis thaliana (Mouse-ear cress).